The primary structure comprises 349 residues: uncharacterized protein (349 aa).

Residues 16–36 form a helical membrane-spanning segment; that stretch reads LVITIISTGLIFGMTLVLTGL. The segment at 111–139 is disordered; that stretch reads FGAPEHGPGMPRVSEGRSPSKPDEVAASS. Residues 124-134 are compositionally biased toward basic and acidic residues; sequence SEGRSPSKPDE. The next 3 helical transmembrane spans lie at 231–251, 284–304, and 307–327; these read ISIV…SVVY, VIAL…APLF, and IVAV…VIGL.

This sequence belongs to the ABC-4 integral membrane protein family. As to quaternary structure, the complex is composed of two ATP-binding proteins (MT0079), two transmembrane proteins (MT0078) and a solute-binding protein.

It localises to the cell membrane. Its function is as follows. Probably part of an ABC transporter complex. Probably responsible for the translocation of the substrate across the membrane. This is an uncharacterized protein from Mycobacterium tuberculosis (strain CDC 1551 / Oshkosh).